The chain runs to 407 residues: Rubber oxygenase (407 aa).

The tat-type signal signal peptide spans 1 to 30 (MDGFSRRRMLMTGGALGAVGALGAATRALA). Position 198 (histidine 198) interacts with heme.

The protein belongs to the rubber oxygenase Lcp family. Heme b serves as cofactor. Post-translationally, exported by the Tat system. The position of the signal peptide cleavage has not been experimentally proven.

It localises to the secreted. It participates in biopolymer metabolism. Involved in the initial step of rubber degradation. Catalyzes the oxidative C-C cleavage of poly(cis-1,4-isoprene) in synthetic as well as in natural rubber by the addition of oxygen (O2) to the double bonds, leading to a mixture of oligonucleotide-isoprenoids with terminal keto and aldehyde groups (endo-type cleavage). The cleavage products are of different lengths, ranging from C20 (four isoprene units) to higher oligo-isoprenoids. Is not able to cleave low-molecular-weight substrate analogs with isoprenoid structure such as squalene (1,4-trans-isoprenoid), carotenoids, or alpha-tocopherol. The sequence is that of Rubber oxygenase from Streptomyces sp. (strain K30).